Reading from the N-terminus, the 244-residue chain is MSLVLLPAVDVVNGEAVRLVQGEAGSETGYGSPRDAALAWQNDGAEWVHIVDLDAAFGRGSNRELLADVVGELDVQVELSGGIRDDASLEAALATGCGRVNLGTAAIENPEWCARAIAKYGEKIAVGLDVRLVDGEYQLRGRGWVTEGGNLWETLARLDKDGCSRYVVTDVSKDGTLTGPNLELLAQVCAATDAPVVASGGVSTIDDLRAIAGLVDRGVEGSIVGKALYAGRFTLPEALAAVSG.

The Proton acceptor role is filled by aspartate 10. The Proton donor role is filled by aspartate 129.

The protein belongs to the HisA/HisF family.

The protein localises to the cytoplasm. It catalyses the reaction 1-(5-phospho-beta-D-ribosyl)-5-[(5-phospho-beta-D-ribosylamino)methylideneamino]imidazole-4-carboxamide = 5-[(5-phospho-1-deoxy-D-ribulos-1-ylimino)methylamino]-1-(5-phospho-beta-D-ribosyl)imidazole-4-carboxamide. It participates in amino-acid biosynthesis; L-histidine biosynthesis; L-histidine from 5-phospho-alpha-D-ribose 1-diphosphate: step 4/9. This Rhodococcus opacus (strain B4) protein is 1-(5-phosphoribosyl)-5-[(5-phosphoribosylamino)methylideneamino] imidazole-4-carboxamide isomerase.